The sequence spans 385 residues: 2-oxoglutarate-dependent dioxygenase AFUA_1G01000 (385 aa).

Residues 203–327 form the Fe2OG dioxygenase domain; sequence PSDDFLRLLR…RYSVLVGTRP (125 aa). Residues H230, D232, and H304 each coordinate Fe cation. R318 lines the 2-oxoglutarate pocket.

Belongs to the iron/ascorbate-dependent oxidoreductase family. The cofactor is Fe(2+).

Functionally, 2-oxoglutarate-dependent dioxygenase; part of the gene cluster that mediates the biosynthesis of fumigermin that inhibits germination of spores of the inducing S.rapamycinicus, and thus helps the fungus to defend resources in the shared habitat against a bacterial competitor. The partially reducing polyketide synthase fngA alone is sufficient for the production of fumigermin. FgnA catalyzes the condensation of 3 malonyl-CoA units to an acetyl-CoA starter, and 3 methylations to yield fumigermin. It is remarkable that the five cluster genes including fgnA are conserved in distantly related fungi, supporting the assumption of a fumigermin cluster; it is thus possible that originally all five genes were functional, but that the genes encoding tailoring enzymes became inactive from mutations, similar to the case of the fgnA gene in strains A1163 and Af293. The chain is 2-oxoglutarate-dependent dioxygenase AFUA_1G01000 from Aspergillus fumigatus (strain ATCC MYA-4609 / CBS 101355 / FGSC A1100 / Af293) (Neosartorya fumigata).